The following is a 473-amino-acid chain: MAQLEGYYFSAALSCTFLVSCLLFSAFSRALREPYMDEIFHLPQAQRYCEGHFSLSQWDPMITTLPGLYLVSIGVIKPAIWIFGWSEHVVCSIGMLRFVNLLFSVGNFYLLYLLFCKVQPRNKAASSIQRVLSTLTLAVFPTLYFFNFLYYTEAGSMFFTLFAYLMCLYGNHKTSAFLGFCGFMFRQTNIIWAVFCAGNVIAQKLTEAWKTELQKKEDRLPPIKGPFAEFRKILQFLLAYSMSFKNLSMLLLLTWPYILLGFLFCAFVVVNGGIVIGDRSSHEACLHFPQLFYFFSFTLFFSFPHLLSPSKIKTFLSLVWKRRILFFVVTLVSVFLVWKFTYAHKYLLADNRHYTFYVWKRVFQRYETVKYLLVPAYIFAGWSIADSLKSKSIFWNLMFFICLFTVIVPQKLLEFRYFILPYVIYRLNIPLPPTSRLICELSCYAVVNFITFFIFLNKTFQWPNSQDIQRFMW.

Over 1–6 (MAQLEG) the chain is Cytoplasmic. Residues 7 to 27 (YYFSAALSCTFLVSCLLFSAF) traverse the membrane as a helical segment. The Extracellular segment spans residues 28–64 (SRALREPYMDEIFHLPQAQRYCEGHFSLSQWDPMITT). The helical transmembrane segment at 65–85 (LPGLYLVSIGVIKPAIWIFGW) threads the bilayer. The Cytoplasmic portion of the chain corresponds to 86–97 (SEHVVCSIGMLR). Residues 98–118 (FVNLLFSVGNFYLLYLLFCKV) traverse the membrane as a helical segment. At 119-130 (QPRNKAASSIQR) the chain is on the extracellular side. Helical transmembrane passes span 131 to 151 (VLST…FLYY) and 152 to 172 (TEAG…YGNH). Topologically, residues 173–175 (KTS) are extracellular. The chain crosses the membrane as a helical span at residues 176–196 (AFLGFCGFMFRQTNIIWAVFC). Over 197-249 (AGNVIAQKLTEAWKTELQKKEDRLPPIKGPFAEFRKILQFLLAYSMSFKNLSM) the chain is Cytoplasmic. The helical transmembrane segment at 250–270 (LLLLTWPYILLGFLFCAFVVV) threads the bilayer. The Extracellular portion of the chain corresponds to 271–283 (NGGIVIGDRSSHE). A helical transmembrane segment spans residues 284 to 304 (ACLHFPQLFYFFSFTLFFSFP). Residues 305 to 323 (HLLSPSKIKTFLSLVWKRR) are Cytoplasmic-facing. Residues 324 to 344 (ILFFVVTLVSVFLVWKFTYAH) traverse the membrane as a helical segment. Residues 345 to 367 (KYLLADNRHYTFYVWKRVFQRYE) lie on the Extracellular side of the membrane. The helical transmembrane segment at 368–388 (TVKYLLVPAYIFAGWSIADSL) threads the bilayer. Residues 389 to 392 (KSKS) lie on the Cytoplasmic side of the membrane. The chain crosses the membrane as a helical span at residues 393–413 (IFWNLMFFICLFTVIVPQKLL). At 414–436 (EFRYFILPYVIYRLNIPLPPTSR) the chain is on the extracellular side. The chain crosses the membrane as a helical span at residues 437–457 (LICELSCYAVVNFITFFIFLN). Over 458-473 (KTFQWPNSQDIQRFMW) the chain is Cytoplasmic.

This sequence belongs to the ALG10 glucosyltransferase family.

It is found in the endoplasmic reticulum membrane. It catalyses the reaction an alpha-D-Glc-(1-&gt;3)-alpha-D-Glc-(1-&gt;3)-alpha-D-Man-(1-&gt;2)-alpha-D-Man-(1-&gt;2)-alpha-D-Man-(1-&gt;3)-[alpha-D-Man-(1-&gt;2)-alpha-D-Man-(1-&gt;3)-[alpha-D-Man-(1-&gt;2)-alpha-D-Man-(1-&gt;6)]-alpha-D-Man-(1-&gt;6)]-beta-D-Man-(1-&gt;4)-beta-D-GlcNAc-(1-&gt;4)-alpha-D-GlcNAc-diphospho-di-trans,poly-cis-dolichol + a di-trans,poly-cis-dolichyl beta-D-glucosyl phosphate = a alpha-D-Glc-(1-&gt;2)-alpha-D-Glc-(1-&gt;3)-alpha-D-Glc-(1-&gt;3)-alpha-D-Man-(1-&gt;2)-alpha-D-Man-(1-&gt;2)-alpha-D-Man-(1-&gt;3)-[alpha-D-Man-(1-&gt;2)-alpha-D-Man-(1-&gt;3)-[alpha-D-Man-(1-&gt;2)-alpha-D-Man-(1-&gt;6)]-alpha-D-Man-(1-&gt;6)]-beta-D-Man-(1-&gt;4)-beta-D-GlcNAc-(1-&gt;4)-alpha-D-GlcNAc-diphospho-di-trans,poly-cis-dolichol + a di-trans,poly-cis-dolichyl phosphate + H(+). Its pathway is protein modification; protein glycosylation. Its function is as follows. Dol-P-Glc:Glc(2)Man(9)GlcNAc(2)-PP-Dol alpha-1,2-glucosyltransferase that operates in the biosynthetic pathway of dolichol-linked oligosaccharides, the glycan precursors employed in protein asparagine (N)-glycosylation. The assembly of dolichol-linked oligosaccharides begins on the cytosolic side of the endoplasmic reticulum membrane and finishes in its lumen. The sequential addition of sugars to dolichol pyrophosphate produces dolichol-linked oligosaccharides containing fourteen sugars, including two GlcNAcs, nine mannoses and three glucoses. Once assembled, the oligosaccharide is transferred from the lipid to nascent proteins by oligosaccharyltransferases. In the lumen of the endoplasmic reticulum, adds the third and last glucose residue from dolichyl phosphate glucose (Dol-P-Glc) onto the lipid-linked oligosaccharide intermediate Glc(2)Man(9)GlcNAc(2)-PP-Dol to produce Glc(3)Man(9)GlcNAc(2)-PP-Dol. This Homo sapiens (Human) protein is Dol-P-Glc:Glc(2)Man(9)GlcNAc(2)-PP-Dol alpha-1,2-glucosyltransferase.